Reading from the N-terminus, the 540-residue chain is Glucose-6-phosphate isomerase (540 aa).

Catalysis depends on Glu346, which acts as the Proton donor. Active-site residues include His377 and Lys505.

Belongs to the GPI family.

Its subcellular location is the cytoplasm. The catalysed reaction is alpha-D-glucose 6-phosphate = beta-D-fructose 6-phosphate. The protein operates within carbohydrate biosynthesis; gluconeogenesis. Its pathway is carbohydrate degradation; glycolysis; D-glyceraldehyde 3-phosphate and glycerone phosphate from D-glucose: step 2/4. Catalyzes the reversible isomerization of glucose-6-phosphate to fructose-6-phosphate. This chain is Glucose-6-phosphate isomerase, found in Francisella tularensis subsp. holarctica (strain FTNF002-00 / FTA).